Consider the following 530-residue polypeptide: Arginine--tRNA ligase (530 aa).

Positions 113–123 (ANPTGPLHIGH) match the 'HIGH' region motif.

Belongs to the class-I aminoacyl-tRNA synthetase family. In terms of assembly, monomer.

The protein resides in the cytoplasm. It catalyses the reaction tRNA(Arg) + L-arginine + ATP = L-arginyl-tRNA(Arg) + AMP + diphosphate. The polypeptide is Arginine--tRNA ligase (Campylobacter jejuni (strain RM1221)).